The chain runs to 610 residues: Zinc metalloproteinase-disintegrin-like acurhagin (610 aa).

An N-terminal signal peptide occupies residues 1 to 20; it reads MIQVLLVTICLAAFPYQGSS. Positions 21–191 are excised as a propeptide; the sequence is IILESGDVND…ISQLNLIPEQ (171 aa). A Pyrrolidone carboxylic acid modification is found at Gln-192. Residues 198–394 form the Peptidase M12B domain; sequence KYVETVVVVD…HNPECIDNEP (197 aa). Ca(2+) contacts are provided by Glu-201 and Asp-285. Intrachain disulfides connect Cys-309–Cys-389, Cys-349–Cys-373, and Cys-351–Cys-356. A Zn(2+)-binding site is contributed by His-334. Residue Glu-335 is part of the active site. Zn(2+) is bound by residues His-338 and His-344. N-linked (GlcNAc...) asparagine glycosylation occurs at Asn-372. Positions 389, 392, 407, 409, 411, 414, and 417 each coordinate Ca(2+). The 87-residue stretch at 402–488 folds into the Disintegrin domain; the sequence is PPLCGNELLE…ECPADVFHKN (87 aa). Intrachain disulfides connect Cys-405/Cys-434, Cys-416/Cys-429, Cys-418/Cys-424, Cys-428/Cys-451, Cys-442/Cys-448, Cys-447/Cys-473, Cys-460/Cys-480, Cys-467/Cys-499, Cys-492/Cys-504, Cys-511/Cys-561, Cys-526/Cys-572, Cys-539/Cys-549, Cys-556/Cys-598, and Cys-592/Cys-603. The short motif at 466–468 is the D/ECD-tripeptide element; sequence ECD. Positions 468, 469, 471, 483, and 484 each coordinate Ca(2+).

The protein belongs to the venom metalloproteinase (M12B) family. P-III subfamily. P-IIIa sub-subfamily. In terms of assembly, monomer. Requires Zn(2+) as cofactor. In terms of processing, N-glycosylated. As to expression, expressed by the venom gland.

It localises to the secreted. Its activity is regulated as follows. The proteinase activity is slightly enhanced by Ca(2+) and Mg(2+), but is completely inhibited by Zn(2+). Is completely inhibited by phenanthroline and EDTA. Not inhibited by PMSF. In terms of biological role, snake venom zinc metalloprotease that causes hemorrhage and dose-dependently inhibits platelet aggregation triggered by collagen. This inhibition is due to its binding to glycoprotein VI (GP6) and collagen. The binding to GP6 results in inhibition of the signaling pathway (decrease of tyrosine phosphorylation of signaling proteins such as Syk, LAT, PI3-K and PLCgamma2). Preferentially cleaves alpha chain (FGA) of fibrinogen, followed by beta chain (FGB). Also degrades the extracellular matrix protein fibronectin (FN1), and cleaves collagen and von Willebrand factor (VWF). The protein is Zinc metalloproteinase-disintegrin-like acurhagin of Deinagkistrodon acutus (Hundred-pace snake).